Here is a 521-residue protein sequence, read N- to C-terminus: Cytochrome P450 monooxygenase astF (521 aa).

Residues 14 to 34 (TMATFLLPVAIGTIILLFLYG) form a helical membrane-spanning segment. Asparagine 198, asparagine 218, asparagine 268, and asparagine 281 each carry an N-linked (GlcNAc...) asparagine glycan. Cysteine 430 provides a ligand contact to heme.

The protein belongs to the cytochrome P450 family. Heme is required as a cofactor.

The protein resides in the membrane. It participates in secondary metabolite biosynthesis; terpenoid biosynthesis. In terms of biological role, cytochrome P450 monooxygenase; part of the gene cluster that mediates the biosynthesis of astellolides, drimane-type sesquiterpene esters that show antimicrobial, anti-inflammatory, and anti-tumor activities. The first step in astellolide biosynthesis is performed by the sesquiterpene cyclase astC that catalyzes the formation of drimanyl pyrophosphate from farnesyl pyrophosphate. Drimanyl pyrophosphate is then dephosphorylated by the sesquiterpene phosphatase astI to produce drimanyl monophosphate which is further dephosphorylated to drim-8-ene-11-ol by atsK. Drim-8-ene-11-ol is converted to confertifolin, probably by the cytochrome P450 monooxygenase astD and/or the dehydrogenase astE. The cytochrome P450 monooxygenases astB, astF and astJ then hydroxylate confertifolin at C6, C14, or C15 to form trihydroxy confertifolin. The nonribosomal peptide synthetase astA catalyzes ester bond formation between trihydroxy contifolin and benzoic acid (BA) or 4-hydroxy benzoic acid (4HBA), leading to the formation of dideacetyl astellolides A and B, respectively. Finally, the O-acetyltransferase astG converts dideacetyl astellolides A and B into deacetyl astellolides A and B. This chain is Cytochrome P450 monooxygenase astF, found in Aspergillus oryzae (strain ATCC 42149 / RIB 40) (Yellow koji mold).